A 443-amino-acid chain; its full sequence is ATP-dependent protease ATPase subunit HslU (443 aa).

ATP contacts are provided by residues Ile18, Gly60–Glu65, Asp256, Glu321, and Arg393.

The protein belongs to the ClpX chaperone family. HslU subfamily. As to quaternary structure, a double ring-shaped homohexamer of HslV is capped on each side by a ring-shaped HslU homohexamer. The assembly of the HslU/HslV complex is dependent on binding of ATP.

The protein resides in the cytoplasm. In terms of biological role, ATPase subunit of a proteasome-like degradation complex; this subunit has chaperone activity. The binding of ATP and its subsequent hydrolysis by HslU are essential for unfolding of protein substrates subsequently hydrolyzed by HslV. HslU recognizes the N-terminal part of its protein substrates and unfolds these before they are guided to HslV for hydrolysis. The protein is ATP-dependent protease ATPase subunit HslU of Shigella boydii serotype 18 (strain CDC 3083-94 / BS512).